Consider the following 138-residue polypeptide: Acidic phospholipase A2 pgPLA 1b/pgPLA 2b (138 aa).

The N-terminal stretch at 1–16 is a signal peptide; sequence MRTLWIMAVLLVGVKG. Disulfide bonds link Cys42-Cys131, Cys44-Cys60, Cys59-Cys111, Cys65-Cys138, Cys66-Cys104, Cys73-Cys97, and Cys91-Cys102. Residues Tyr43, Gly45, and Gly47 each contribute to the Ca(2+) site. The active site involves His63. Asp64 contributes to the Ca(2+) binding site. Residue Asp105 is part of the active site.

It belongs to the phospholipase A2 family. Group II subfamily. D49 sub-subfamily. The cofactor is Ca(2+). Expressed by the venom gland.

Its subcellular location is the secreted. It carries out the reaction a 1,2-diacyl-sn-glycero-3-phosphocholine + H2O = a 1-acyl-sn-glycero-3-phosphocholine + a fatty acid + H(+). In terms of biological role, PLA2 catalyzes the calcium-dependent hydrolysis of the 2-acyl groups in 3-sn-phosphoglycerides. The polypeptide is Acidic phospholipase A2 pgPLA 1b/pgPLA 2b (Protobothrops flavoviridis (Habu)).